The following is a 246-amino-acid chain: Probable transcriptional regulatory protein ASA_2843 (246 aa).

Belongs to the TACO1 family.

It is found in the cytoplasm. The protein is Probable transcriptional regulatory protein ASA_2843 of Aeromonas salmonicida (strain A449).